Consider the following 261-residue polypeptide: Sepiapterin reductase (261 aa).

An N-acetylmethionine modification is found at Met1. 15 to 21 provides a ligand contact to NADP(+); that stretch reads GASRGFG. A Phosphoserine modification is found at Ser33. 43–44 is a binding site for NADP(+); it reads RS. A Phosphoserine modification is found at Ser46. Residue 70 to 71 coordinates NADP(+); that stretch reads DL. Substrate contacts are provided by residues 158–159 and Tyr171; that span reads SL. Residue Lys175 participates in NADP(+) binding. At Ser196 the chain carries Phosphoserine. Gly200 lines the substrate pocket. Position 202–207 (202–207) interacts with NADP(+); that stretch reads LDNDMQ. A Phosphoserine modification is found at Ser214. Substrate contacts are provided by Lys222 and Asp258.

It belongs to the sepiapterin reductase family. In terms of assembly, homodimer.

It localises to the cytoplasm. It carries out the reaction L-erythro-7,8-dihydrobiopterin + NADP(+) = L-sepiapterin + NADPH + H(+). The enzyme catalyses (6R)-L-erythro-5,6,7,8-tetrahydrobiopterin + 2 NADP(+) = 6-pyruvoyl-5,6,7,8-tetrahydropterin + 2 NADPH + 2 H(+). In terms of biological role, catalyzes the final one or two reductions in tetra-hydrobiopterin biosynthesis to form 5,6,7,8-tetrahydrobiopterin. The sequence is that of Sepiapterin reductase (Spr) from Mus musculus (Mouse).